Consider the following 414-residue polypeptide: MTIKGKYMRLSSDSLSSYLSPNLADNSVVCLMAPTASGKTALAYELYNSGRYELISVDSALVYRDMTVGTAKPNAAELARYPHHLVDIIDPMQSYSVAEFVNDVARLIDSCHQNGKIPLLVGGTMMYYMALLDGLSPVPDSDDSVRARVEQWRQDEGISALYDYLGKVDAISHERLNATDTQRITRAVEVYLQTDIPISDWQRQPKQALAYNPNQQWHALAVMPDRPWLHTRIEQRLDIMWREGLVAEVISLLEHYPLTPGLPSMRCVGYRQVLEYLVQTNHPVFEQPHLDKAQFYDAFAQSEPSSNESKEQDTTIQSSITQTHLPMATAQTEALACQQMQNKALYATRQLAKRQYTWLRKVMQLSNTAAVPTTESITASSTSTVGSDDVTDFQKNKLILHSFSTMEQARAYLV.

An ATP-binding site is contributed by 33–40 (APTASGKT). Substrate is bound at residue 35 to 40 (TASGKT). Interaction with substrate tRNA stretches follow at residues 58-61 (DSAL), 182-186 (QRITR), and 266-271 (RCVGYR).

The protein belongs to the IPP transferase family. Monomer. It depends on Mg(2+) as a cofactor.

It catalyses the reaction adenosine(37) in tRNA + dimethylallyl diphosphate = N(6)-dimethylallyladenosine(37) in tRNA + diphosphate. Its function is as follows. Catalyzes the transfer of a dimethylallyl group onto the adenine at position 37 in tRNAs that read codons beginning with uridine, leading to the formation of N6-(dimethylallyl)adenosine (i(6)A). This Psychrobacter cryohalolentis (strain ATCC BAA-1226 / DSM 17306 / VKM B-2378 / K5) protein is tRNA dimethylallyltransferase.